A 157-amino-acid chain; its full sequence is Endoribonuclease YbeY (157 aa).

Zn(2+)-binding residues include His-121, His-125, and Asp-131.

The protein belongs to the endoribonuclease YbeY family. Zn(2+) is required as a cofactor.

Its subcellular location is the cytoplasm. In terms of biological role, single strand-specific metallo-endoribonuclease involved in late-stage 70S ribosome quality control and in maturation of the 3' terminus of the 16S rRNA. The chain is Endoribonuclease YbeY from Salinibacter ruber (strain DSM 13855 / M31).